A 230-amino-acid polypeptide reads, in one-letter code: Cytidylate kinase (230 aa).

Residue 12-20 participates in ATP binding; the sequence is GPSGAGKGT.

It belongs to the cytidylate kinase family. Type 1 subfamily.

The protein localises to the cytoplasm. The catalysed reaction is CMP + ATP = CDP + ADP. The enzyme catalyses dCMP + ATP = dCDP + ADP. This chain is Cytidylate kinase, found in Shewanella sediminis (strain HAW-EB3).